A 269-amino-acid polypeptide reads, in one-letter code: Formamidopyrimidine-DNA glycosylase (269 aa).

P2 acts as the Schiff-base intermediate with DNA in catalysis. E3 (proton donor) is an active-site residue. K57 serves as the catalytic Proton donor; for beta-elimination activity. DNA-binding residues include H90, R109, and K150. The FPG-type zinc-finger motif lies at Q235 to K269. R259 acts as the Proton donor; for delta-elimination activity in catalysis.

The protein belongs to the FPG family. As to quaternary structure, monomer. Zn(2+) serves as cofactor.

It catalyses the reaction Hydrolysis of DNA containing ring-opened 7-methylguanine residues, releasing 2,6-diamino-4-hydroxy-5-(N-methyl)formamidopyrimidine.. It carries out the reaction 2'-deoxyribonucleotide-(2'-deoxyribose 5'-phosphate)-2'-deoxyribonucleotide-DNA = a 3'-end 2'-deoxyribonucleotide-(2,3-dehydro-2,3-deoxyribose 5'-phosphate)-DNA + a 5'-end 5'-phospho-2'-deoxyribonucleoside-DNA + H(+). Its function is as follows. Involved in base excision repair of DNA damaged by oxidation or by mutagenic agents. Acts as a DNA glycosylase that recognizes and removes damaged bases. Has a preference for oxidized purines, such as 7,8-dihydro-8-oxoguanine (8-oxoG). Has AP (apurinic/apyrimidinic) lyase activity and introduces nicks in the DNA strand. Cleaves the DNA backbone by beta-delta elimination to generate a single-strand break at the site of the removed base with both 3'- and 5'-phosphates. This Escherichia coli (strain K12 / MC4100 / BW2952) protein is Formamidopyrimidine-DNA glycosylase.